Consider the following 505-residue polypeptide: Lysine--tRNA ligase (505 aa).

Mg(2+) is bound by residues Glu415 and Glu422.

It belongs to the class-II aminoacyl-tRNA synthetase family. Homodimer. Mg(2+) is required as a cofactor.

The protein resides in the cytoplasm. The enzyme catalyses tRNA(Lys) + L-lysine + ATP = L-lysyl-tRNA(Lys) + AMP + diphosphate. This is Lysine--tRNA ligase (lysS) from Escherichia coli (strain K12).